The primary structure comprises 523 residues: MTATAGSNKRAIRRALVSVYDKTGLEDLARGLHEAGVELVSTGSTAGRIAAAGVPVTKVEELTGFPECLDGRVKTLHPKVHAGILADLRLESHRQQLDELGVAPFDLVVVNLYPFRETVASGATPDECVEQIDIGGPSMVRAAAKNHPSVAVVTSPARYADVLLAVEGGGFDLAARKRLAAEAFQHTAAYDVAVASWFAAEYAPVDESGFPDFLGATYERANTLRYGENPHQPAALYTSPEGGGLAQAEQLHGKEMSYNNYTDTDAARRAAYDHAEPCVAIIKHANPCGIAIGADVAEAHRKAHDCDPVSAYGGVIAVNRPVSKEMAERVAGIFTEVIVAPDYEDGALEALTKKKNIRVLRAPAAPAAPVEVKPIDGGALLQVTDRLQAEGDDPATWTLATGEALSEAELAELAFAWRACRAVKSNAILLAKDGASVGVGMGQVNRVDSAKLAVERAGAERAQGAYAASDAFFPFPDGLEILTGAGVKAVVQPGGSVRDELVVEAAKKAGVTMYFTGTRHFFH.

In terms of domain architecture, MGS-like spans 1–154 (MTATAGSNKR…KNHPSVAVVT (154 aa)).

The protein belongs to the PurH family.

It catalyses the reaction (6R)-10-formyltetrahydrofolate + 5-amino-1-(5-phospho-beta-D-ribosyl)imidazole-4-carboxamide = 5-formamido-1-(5-phospho-D-ribosyl)imidazole-4-carboxamide + (6S)-5,6,7,8-tetrahydrofolate. It carries out the reaction IMP + H2O = 5-formamido-1-(5-phospho-D-ribosyl)imidazole-4-carboxamide. It functions in the pathway purine metabolism; IMP biosynthesis via de novo pathway; 5-formamido-1-(5-phospho-D-ribosyl)imidazole-4-carboxamide from 5-amino-1-(5-phospho-D-ribosyl)imidazole-4-carboxamide (10-formyl THF route): step 1/1. Its pathway is purine metabolism; IMP biosynthesis via de novo pathway; IMP from 5-formamido-1-(5-phospho-D-ribosyl)imidazole-4-carboxamide: step 1/1. The protein is Bifunctional purine biosynthesis protein PurH of Streptomyces coelicolor (strain ATCC BAA-471 / A3(2) / M145).